Here is a 375-residue protein sequence, read N- to C-terminus: Succinyl-diaminopimelate desuccinylase (375 aa).

His66 provides a ligand contact to Zn(2+). The active site involves Asp68. A Zn(2+)-binding site is contributed by Asp99. Residue Glu133 is the Proton acceptor of the active site. Glu134, Glu162, and His348 together coordinate Zn(2+).

This sequence belongs to the peptidase M20A family. DapE subfamily. In terms of assembly, homodimer. Zn(2+) serves as cofactor. It depends on Co(2+) as a cofactor.

It catalyses the reaction N-succinyl-(2S,6S)-2,6-diaminopimelate + H2O = (2S,6S)-2,6-diaminopimelate + succinate. It functions in the pathway amino-acid biosynthesis; L-lysine biosynthesis via DAP pathway; LL-2,6-diaminopimelate from (S)-tetrahydrodipicolinate (succinylase route): step 3/3. Catalyzes the hydrolysis of N-succinyl-L,L-diaminopimelic acid (SDAP), forming succinate and LL-2,6-diaminopimelate (DAP), an intermediate involved in the bacterial biosynthesis of lysine and meso-diaminopimelic acid, an essential component of bacterial cell walls. The polypeptide is Succinyl-diaminopimelate desuccinylase (Alkalilimnicola ehrlichii (strain ATCC BAA-1101 / DSM 17681 / MLHE-1)).